The following is a 207-amino-acid chain: Large ribosomal subunit protein uL3c (207 aa).

Residues 129 to 148 form a disordered region; the sequence is TRGPMTHGSKNHRAPGSIGM.

The protein belongs to the universal ribosomal protein uL3 family. In terms of assembly, part of the 50S ribosomal subunit.

It is found in the plastid. Its subcellular location is the chloroplast. In terms of biological role, one of the primary rRNA binding proteins, it binds directly near the 3'-end of the 23S rRNA, where it nucleates assembly of the 50S subunit. This Phaeodactylum tricornutum (strain CCAP 1055/1) protein is Large ribosomal subunit protein uL3c (rpl3).